Reading from the N-terminus, the 284-residue chain is Probable palmitoyltransferase ZDHHC24 (284 aa).

Residues 1–18 (MGESWAARGAEGAPARMP) lie on the Cytoplasmic side of the membrane. The helical transmembrane segment at 19–39 (LVLTALWAAVVVLELAYVMVL) threads the bilayer. Over 40 to 52 (GPGPPPLGPLARA) the chain is Extracellular. The chain crosses the membrane as a helical span at residues 53-73 (LQLALAAYQLLNLLGNVVLFL). Topologically, residues 74–137 (RSDPSIRGVM…GCCVGFHNYR (64 aa)) are cytoplasmic. One can recognise a DHHC domain in the interval 94–144 (AYCYQCQSQVPPRSGHCSACRVCILRRDHHCRLLGCCVGFHNYRPFLCLLL). Residue C124 is the S-palmitoyl cysteine intermediate of the active site. A helical transmembrane segment spans residues 138-158 (PFLCLLLHSAGVLLHISVLLG). At 159–166 (PALSALLQ) the chain is on the extracellular side. The helical transmembrane segment at 167–187 (AHSALYTVALLLLPWLMLLTG) threads the bilayer. Residues 188–195 (KVSLAQFA) are Cytoplasmic-facing. Residues 196 to 216 (LAFVVDTCVAGALLCGAGLLF) form a helical membrane-spanning segment. The Extracellular segment spans residues 217–284 (HGMLLLRGQT…TPGDVGLVTS (68 aa)).

It belongs to the DHHC palmitoyltransferase family.

The protein localises to the membrane. The enzyme catalyses L-cysteinyl-[protein] + hexadecanoyl-CoA = S-hexadecanoyl-L-cysteinyl-[protein] + CoA. Functionally, probable palmitoyltransferase that could catalyze the addition of palmitate onto various protein substrates. This Mus musculus (Mouse) protein is Probable palmitoyltransferase ZDHHC24.